A 577-amino-acid polypeptide reads, in one-letter code: Phosphoenolpyruvate-protein phosphotransferase (577 aa).

H191 serves as the catalytic Tele-phosphohistidine intermediate. Phosphoenolpyruvate is bound by residues R298 and R334. Mg(2+)-binding residues include E435 and D459. Phosphoenolpyruvate is bound by residues 458-459 and R469; that span reads ND. The Proton donor role is filled by C506.

It belongs to the PEP-utilizing enzyme family. Homodimer. Requires Mg(2+) as cofactor.

It is found in the cytoplasm. It carries out the reaction L-histidyl-[protein] + phosphoenolpyruvate = N(pros)-phospho-L-histidyl-[protein] + pyruvate. In terms of biological role, general (non sugar-specific) component of the phosphoenolpyruvate-dependent sugar phosphotransferase system (sugar PTS). This major carbohydrate active-transport system catalyzes the phosphorylation of incoming sugar substrates concomitantly with their translocation across the cell membrane. Enzyme I transfers the phosphoryl group from phosphoenolpyruvate (PEP) to the phosphoryl carrier protein (HPr). The sequence is that of Phosphoenolpyruvate-protein phosphotransferase (ptsI) from Streptococcus equinus (Streptococcus bovis).